The sequence spans 355 residues: UDP-N-acetylglucosamine--N-acetylmuramyl-(pentapeptide) pyrophosphoryl-undecaprenol N-acetylglucosamine transferase (355 aa).

Residues 15-17 (TGG), Asn-127, Arg-163, Ser-191, Ile-244, 263-268 (ALTVSE), and Gln-288 contribute to the UDP-N-acetyl-alpha-D-glucosamine site.

The protein belongs to the glycosyltransferase 28 family. MurG subfamily.

It is found in the cell inner membrane. The catalysed reaction is di-trans,octa-cis-undecaprenyl diphospho-N-acetyl-alpha-D-muramoyl-L-alanyl-D-glutamyl-meso-2,6-diaminopimeloyl-D-alanyl-D-alanine + UDP-N-acetyl-alpha-D-glucosamine = di-trans,octa-cis-undecaprenyl diphospho-[N-acetyl-alpha-D-glucosaminyl-(1-&gt;4)]-N-acetyl-alpha-D-muramoyl-L-alanyl-D-glutamyl-meso-2,6-diaminopimeloyl-D-alanyl-D-alanine + UDP + H(+). Its pathway is cell wall biogenesis; peptidoglycan biosynthesis. Cell wall formation. Catalyzes the transfer of a GlcNAc subunit on undecaprenyl-pyrophosphoryl-MurNAc-pentapeptide (lipid intermediate I) to form undecaprenyl-pyrophosphoryl-MurNAc-(pentapeptide)GlcNAc (lipid intermediate II). This is UDP-N-acetylglucosamine--N-acetylmuramyl-(pentapeptide) pyrophosphoryl-undecaprenol N-acetylglucosamine transferase from Salmonella arizonae (strain ATCC BAA-731 / CDC346-86 / RSK2980).